The sequence spans 333 residues: Beta-ketoacyl-[acyl-carrier-protein] synthase III (333 aa).

Active-site residues include Cys112 and His255. Residues 256 to 260 form an ACP-binding region; the sequence is QANQR. Asn285 is an active-site residue.

This sequence belongs to the thiolase-like superfamily. FabH family. In terms of assembly, homodimer.

The protein localises to the cytoplasm. The catalysed reaction is malonyl-[ACP] + acetyl-CoA + H(+) = 3-oxobutanoyl-[ACP] + CO2 + CoA. The protein operates within lipid metabolism; fatty acid biosynthesis. Catalyzes the condensation reaction of fatty acid synthesis by the addition to an acyl acceptor of two carbons from malonyl-ACP. Catalyzes the first condensation reaction which initiates fatty acid synthesis and may therefore play a role in governing the total rate of fatty acid production. Possesses both acetoacetyl-ACP synthase and acetyl transacylase activities. Its substrate specificity determines the biosynthesis of branched-chain and/or straight-chain of fatty acids. The sequence is that of Beta-ketoacyl-[acyl-carrier-protein] synthase III from Synechococcus sp. (strain RCC307).